A 171-amino-acid chain; its full sequence is Lipoprotein signal peptidase (171 aa).

The next 3 helical transmembrane spans lie at 12 to 32 (WYWVAVLVFFADQLSKQWVLA), 67 to 87 (WQRWLFTIVAVGFSTLLTVWL), and 93 to 113 (SLLKLNLAYTLVIGGALGNLV). Catalysis depends on residues D123 and D141. A helical transmembrane segment spans residues 137 to 157 (FNIADSAICIGAVLIIWDAFL).

The protein belongs to the peptidase A8 family.

It is found in the cell inner membrane. It carries out the reaction Release of signal peptides from bacterial membrane prolipoproteins. Hydrolyzes -Xaa-Yaa-Zaa-|-(S,diacylglyceryl)Cys-, in which Xaa is hydrophobic (preferably Leu), and Yaa (Ala or Ser) and Zaa (Gly or Ala) have small, neutral side chains.. It participates in protein modification; lipoprotein biosynthesis (signal peptide cleavage). In terms of biological role, this protein specifically catalyzes the removal of signal peptides from prolipoproteins. The chain is Lipoprotein signal peptidase from Shewanella baltica (strain OS223).